Consider the following 278-residue polypeptide: Gasdermin-like protein het-Q1 (278 aa).

Belongs to the gasdermin family. As to quaternary structure, homooligomer; forms a homooligomeric ring-shaped pore complex when inserted in the membrane. In terms of processing, the precursor form is cleaved by het-Q2, generating the pore-forming protein (Gasdermin-like protein het-Q1, N-terminal).

It is found in the cell membrane. In terms of biological role, gasdermin-like protein involved in heterokaryon incompatibility, a process that ensures that during spontaneous vegetative cell fusion, only compatible cells from the same colony survive (non-self-recognition). In P.anserina, the het-q locus exists as 2 incompatible alleles, het-Q1 (this entry) and het-Q2 (AC P0DW09). This form constitutes the precursor of the pore-forming protein: during the allorecognition process, it is cleaved by het-Q2, releasing the N-terminal moiety (Gasdermin-like protein het-Q1, N-terminal) that binds to membranes and forms pores, triggering cell death. Pore-forming protein that causes membrane permeabilization and cell death. Released upon cleavage and maturation by het-Q2 and binds to membrane inner leaflet lipids. Homooligomerizes within the membrane and forms pores of 10-15 nanometers (nm) of inner diameter, triggering cell death. The chain is Gasdermin-like protein het-Q1 from Podospora anserina (strain S / ATCC MYA-4624 / DSM 980 / FGSC 10383) (Pleurage anserina).